Reading from the N-terminus, the 233-residue chain is Antigenic membrane protein (233 aa).

Residues 1–32 (MQNQKNQKSLVAKVLVLFAAVALMFVGVQVFA) form the signal peptide. The helical transmembrane segment at 206–226 (FLTLVAVVVVAAVAGGVFFFV) threads the bilayer.

It localises to the cell membrane. The chain is Antigenic membrane protein (amp) from Onion yellows phytoplasma (strain OY-M).